The chain runs to 178 residues: MORN repeat-containing protein 5 (178 aa).

MORN repeat units lie at residues 8–30 (YDGDYNNGRMEGTGEYTIPTHTR), 31–53 (YVGEMKDGMFHGKGVLHFPNGSK), and 54–75 (YEGTWEKGICKEGKYTFSDGLK).

It is found in the cell projection. The protein localises to the cilium. It localises to the flagellum. The sequence is that of MORN repeat-containing protein 5 (morn5) from Danio rerio (Zebrafish).